A 248-amino-acid chain; its full sequence is NAD-dependent protein deacylase 2 (248 aa).

The Deacetylase sirtuin-type domain occupies 1–248; the sequence is MLQAASALRH…HVMAELISHI (248 aa). NAD(+) contacts are provided by residues 19-38 and 102-105; these read GAGL…GGLY and QNVD. H122 (proton acceptor) is an active-site residue. The Zn(2+) site is built by C130, C133, C152, and C155. Residues 193-195, 219-221, and A237 each bind NAD(+); these read GTT and NPQ.

Belongs to the sirtuin family. Class III subfamily. Requires Zn(2+) as cofactor.

It localises to the cytoplasm. The enzyme catalyses N(6)-acetyl-L-lysyl-[protein] + NAD(+) + H2O = 2''-O-acetyl-ADP-D-ribose + nicotinamide + L-lysyl-[protein]. In terms of biological role, NAD-dependent protein deacetylase which modulates the activities of several proteins which are inactive in their acetylated form. This Pseudomonas syringae pv. tomato (strain ATCC BAA-871 / DC3000) protein is NAD-dependent protein deacylase 2 (cobB2).